Consider the following 285-residue polypeptide: 4-hydroxybenzoate octaprenyltransferase (285 aa).

Helical transmembrane passes span proline 17 to glycine 37, proline 41 to isoleucine 61, leucine 92 to leucine 112, histidine 135 to alanine 155, glycine 158 to tyrosine 178, alanine 216 to leucine 236, and alanine 263 to leucine 283.

The protein belongs to the UbiA prenyltransferase family. Mg(2+) is required as a cofactor.

It is found in the cell inner membrane. It carries out the reaction all-trans-octaprenyl diphosphate + 4-hydroxybenzoate = 4-hydroxy-3-(all-trans-octaprenyl)benzoate + diphosphate. It participates in cofactor biosynthesis; ubiquinone biosynthesis. Functionally, catalyzes the prenylation of para-hydroxybenzoate (PHB) with an all-trans polyprenyl group. Mediates the second step in the final reaction sequence of ubiquinone-8 (UQ-8) biosynthesis, which is the condensation of the polyisoprenoid side chain with PHB, generating the first membrane-bound Q intermediate 3-octaprenyl-4-hydroxybenzoate. This is 4-hydroxybenzoate octaprenyltransferase from Nitrosococcus oceani (strain ATCC 19707 / BCRC 17464 / JCM 30415 / NCIMB 11848 / C-107).